The following is a 179-amino-acid chain: Translation initiation factor IF-3 (179 aa).

Belongs to the IF-3 family. As to quaternary structure, monomer.

It is found in the cytoplasm. Functionally, IF-3 binds to the 30S ribosomal subunit and shifts the equilibrium between 70S ribosomes and their 50S and 30S subunits in favor of the free subunits, thus enhancing the availability of 30S subunits on which protein synthesis initiation begins. The polypeptide is Translation initiation factor IF-3 (Bradyrhizobium diazoefficiens (strain JCM 10833 / BCRC 13528 / IAM 13628 / NBRC 14792 / USDA 110)).